The following is a 322-amino-acid chain: Packaging protein 3 (322 aa).

The interval Met1–Leu24 is disordered. Residues Met1–Thr127 are interaction with packaging protein 1.

It belongs to the adenoviridae packaging protein 3 family. As to quaternary structure, part of the genome packaging complex composed of packaging proteins 1, 2 and 3; this complex specifically binds to the packaging sequence on the left end of viral genomic DNA and performs packaging of the viral genome. Interacts with hexon-linking protein IIIa; this interaction is required to promote correct genome packaging. In terms of processing, cleaved at different sites by the viral protease during virion maturation.

Its subcellular location is the host nucleus. Involved in viral genome packaging through its interaction with packaging proteins 1 and 2. After proteolytic cleavage by adenovirus protease, L1 52/55k protein is removed from the capsid during viral maturation. In Pantherophis guttatus (Corn snake), this protein is Packaging protein 3.